Here is a 456-residue protein sequence, read N- to C-terminus: 26S proteasome non-ATPase regulatory subunit 12 (456 aa).

The residue at position 2 (Ala-2) is an N-acetylalanine. Lys-92 is covalently cross-linked (Glycyl lysine isopeptide (Lys-Gly) (interchain with G-Cter in SUMO1); alternate). Lys-92 participates in a covalent cross-link: Glycyl lysine isopeptide (Lys-Gly) (interchain with G-Cter in SUMO2); alternate. N6-acetyllysine occurs at positions 221 and 368. Residues Ser-242–Asp-420 enclose the PCI domain.

The protein belongs to the proteasome subunit p55 family. In terms of assembly, component of the 19S proteasome regulatory particle complex. The 26S proteasome consists of a 20S core particle (CP) and two 19S regulatory subunits (RP). The regulatory particle is made of a lid composed of 9 subunits including PSMD12, a base containing 6 ATPases and few additional components. Interacts with ERCC6.

Component of the 26S proteasome, a multiprotein complex involved in the ATP-dependent degradation of ubiquitinated proteins. This complex plays a key role in the maintenance of protein homeostasis by removing misfolded or damaged proteins, which could impair cellular functions, and by removing proteins whose functions are no longer required. Therefore, the proteasome participates in numerous cellular processes, including cell cycle progression, apoptosis, or DNA damage repair. The protein is 26S proteasome non-ATPase regulatory subunit 12 (PSMD12) of Homo sapiens (Human).